Consider the following 191-residue polypeptide: Molybdenum cofactor guanylyltransferase (191 aa).

GTP-binding positions include 13-15 (LAG), lysine 26, aspartate 72, and aspartate 102. A Mg(2+)-binding site is contributed by aspartate 102.

Belongs to the MobA family. Monomer. Requires Mg(2+) as cofactor.

Its subcellular location is the cytoplasm. The catalysed reaction is Mo-molybdopterin + GTP + H(+) = Mo-molybdopterin guanine dinucleotide + diphosphate. Transfers a GMP moiety from GTP to Mo-molybdopterin (Mo-MPT) cofactor (Moco or molybdenum cofactor) to form Mo-molybdopterin guanine dinucleotide (Mo-MGD) cofactor. This is Molybdenum cofactor guanylyltransferase from Pseudomonas putida (strain ATCC 47054 / DSM 6125 / CFBP 8728 / NCIMB 11950 / KT2440).